Reading from the N-terminus, the 87-residue chain is Small ribosomal subunit protein uS15 (87 aa).

The protein belongs to the universal ribosomal protein uS15 family. Part of the 30S ribosomal subunit. Forms a bridge to the 50S subunit in the 70S ribosome, contacting the 23S rRNA.

Functionally, one of the primary rRNA binding proteins, it binds directly to 16S rRNA where it helps nucleate assembly of the platform of the 30S subunit by binding and bridging several RNA helices of the 16S rRNA. Its function is as follows. Forms an intersubunit bridge (bridge B4) with the 23S rRNA of the 50S subunit in the ribosome. This chain is Small ribosomal subunit protein uS15, found in Alkaliphilus oremlandii (strain OhILAs) (Clostridium oremlandii (strain OhILAs)).